The primary structure comprises 126 residues: Methylglyoxal synthase (126 aa).

Residues 1-126 (MAGGKCIALI…AERLIKTLNH (126 aa)) enclose the MGS-like domain. Substrate-binding positions include His-12, Lys-16, 38–41 (TGTT), and 59–60 (SG). The active-site Proton donor/acceptor is Asp-65. Substrate is bound at residue His-92.

The protein belongs to the methylglyoxal synthase family.

It catalyses the reaction dihydroxyacetone phosphate = methylglyoxal + phosphate. Catalyzes the formation of methylglyoxal from dihydroxyacetone phosphate. The polypeptide is Methylglyoxal synthase (Rhizobium rhizogenes (strain K84 / ATCC BAA-868) (Agrobacterium radiobacter)).